A 151-amino-acid polypeptide reads, in one-letter code: Large ribosomal subunit protein uL23m (151 aa).

The segment covering 120 to 143 has biased composition (basic and acidic residues); that stretch reads DDKKSLEDAKKNHKKFLDKNKDRP. Residues 120–151 form a disordered region; it reads DDKKSLEDAKKNHKKFLDKNKDRPGTPGWFSI.

This sequence belongs to the universal ribosomal protein uL23 family. Component of the mitochondrial ribosome large subunit (39S) which comprises a 16S rRNA and about 50 distinct proteins.

The protein resides in the mitochondrion. The chain is Large ribosomal subunit protein uL23m (mRpL23) from Anopheles gambiae (African malaria mosquito).